Reading from the N-terminus, the 176-residue chain is Translation initiation factor IF-3 (176 aa).

It belongs to the IF-3 family. In terms of assembly, monomer.

Its subcellular location is the cytoplasm. Its function is as follows. IF-3 binds to the 30S ribosomal subunit and shifts the equilibrium between 70S ribosomes and their 50S and 30S subunits in favor of the free subunits, thus enhancing the availability of 30S subunits on which protein synthesis initiation begins. The protein is Translation initiation factor IF-3 of Microcystis aeruginosa (strain NIES-843 / IAM M-2473).